We begin with the raw amino-acid sequence, 258 residues long: Dihydroorotate dehydrogenase B (NAD(+)), electron transfer subunit (258 aa).

The region spanning 2 to 100 (ILKENLTVVS…LGPQGNGFDL (99 aa)) is the FAD-binding FR-type domain. FAD contacts are provided by residues 51 to 54 (RPIS), 68 to 70 (IYR), and 75 to 76 (GT). Residues Cys-220, Cys-225, Cys-228, and Cys-244 each coordinate [2Fe-2S] cluster.

Belongs to the PyrK family. As to quaternary structure, heterotetramer of 2 PyrK and 2 PyrD type B subunits. It depends on [2Fe-2S] cluster as a cofactor. FAD serves as cofactor.

It participates in pyrimidine metabolism; UMP biosynthesis via de novo pathway; orotate from (S)-dihydroorotate (NAD(+) route): step 1/1. Its function is as follows. Responsible for channeling the electrons from the oxidation of dihydroorotate from the FMN redox center in the PyrD type B subunit to the ultimate electron acceptor NAD(+). The protein is Dihydroorotate dehydrogenase B (NAD(+)), electron transfer subunit of Streptococcus mutans serotype c (strain ATCC 700610 / UA159).